A 114-amino-acid polypeptide reads, in one-letter code: Hydrogenase maturation factor HypA (114 aa).

Position 2 (His-2) interacts with Ni(2+). Residues Cys-74, Cys-77, Cys-90, and Cys-93 each coordinate Zn(2+).

This sequence belongs to the HypA/HybF family.

Its function is as follows. Involved in the maturation of [NiFe] hydrogenases. Required for nickel insertion into the metal center of the hydrogenase. The chain is Hydrogenase maturation factor HypA from Campylobacter jejuni subsp. jejuni serotype O:2 (strain ATCC 700819 / NCTC 11168).